The primary structure comprises 194 residues: dCTP deaminase (194 aa).

Residues 110 to 115 (RSSLAR), Asp128, 136 to 138 (VLE), Tyr171, Lys178, and Gln182 contribute to the dCTP site. Glu138 functions as the Proton donor/acceptor in the catalytic mechanism. A disordered region spans residues 171-194 (YNKRKNAKYKDQQEAVASRISQDS).

Belongs to the dCTP deaminase family. Homotrimer.

The enzyme catalyses dCTP + H2O + H(+) = dUTP + NH4(+). It participates in pyrimidine metabolism; dUMP biosynthesis; dUMP from dCTP (dUTP route): step 1/2. In terms of biological role, catalyzes the deamination of dCTP to dUTP. This Shewanella amazonensis (strain ATCC BAA-1098 / SB2B) protein is dCTP deaminase.